Here is a 374-residue protein sequence, read N- to C-terminus: MLDRDVGPTPMYPPSYMEPGIGRHTPYGNQTDYRIFELNKRLQNWTEQDCDNLWWDAFTTEFFEDDAMLTITFCLEDGPKRYTIGRTLIPRYFRSIFEGGATELFYVLKHPKESFHNNFVSLDCDQCTMVTQNGKPMFTQVCVEGRLYLEFMFDDMMRIKTWHFSIRQHREVVPRSILAMHAQDPQMLDQLSKNITRCGLSNSTLNYLRLCVILEPMQELMSRHKTYSLSPRDCLKTCLFQKWQRMVAPPAEPARQAPNKRRKRKMSGGSTMSSGGGNNNNSNSKKKSPASSFALSSQDVMVVGEPTLMGGEFGDEDERLITRLENTQFDAANGIDDEDSFNSSPTMGTNSPWNSKAPSSQQGKNDNPSSQSSQ.

3 disordered regions span residues 1–24 (MLDR…IGRH), 249–297 (PPAE…ALSS), and 322–374 (TRLE…QSSQ). The segment covering 267–297 (SGGSTMSSGGGNNNNSNSKKKSPASSFALSS) has biased composition (low complexity). Residues 299 to 338 (DVMVVGEPTLMGGEFGDEDERLITRLENTQFDAANGIDDE) form the LIM interaction domain (LID) domain. Over residues 341–374 (FNSSPTMGTNSPWNSKAPSSQQGKNDNPSSQSSQ) the composition is skewed to polar residues.

Belongs to the LDB family. In terms of tissue distribution, expressed ubiquitously in the embryo and adult.

It is found in the nucleus. Binds to the LIM domain of a wide variety of LIM domain-containing transcription factors. The polypeptide is LIM domain-binding protein 1-A (ldb1a) (Danio rerio (Zebrafish)).